Consider the following 350-residue polypeptide: Protein Wnt-8b (350 aa).

A signal peptide spans 1 to 21 (MFLMKPVCVLLVTCVLHRSHA). A disulfide bridge connects residues Cys53 and Cys64. The N-linked (GlcNAc...) asparagine glycan is linked to Asn102. Disulfide bonds link Cys103/Cys111, Cys113/Cys131, Cys179/Cys193, Cys181/Cys188, Cys255/Cys293, Cys271/Cys286, Cys290/Cys332, Cys308/Cys323, Cys310/Cys320, and Cys315/Cys316. The O-palmitoleoyl serine moiety is linked to residue Ser185. Asn258 carries N-linked (GlcNAc...) asparagine glycosylation.

The protein belongs to the Wnt family. Palmitoleoylation is required for efficient binding to frizzled receptors. Depalmitoleoylation leads to Wnt signaling pathway inhibition. In terms of processing, proteolytic processing by TIKI1 and TIKI2 promotes oxidation and formation of large disulfide-bond oligomers, leading to inactivation of WNT8B.

Its subcellular location is the secreted. The protein resides in the extracellular space. It localises to the extracellular matrix. Functionally, ligand for members of the frizzled family of seven transmembrane receptors. May play an important role in the development and differentiation of certain forebrain structures, notably the hippocampus. This is Protein Wnt-8b (Wnt8b) from Mus musculus (Mouse).